The primary structure comprises 491 residues: Cell division control protein 1 (491 aa).

A disordered region spans residues 1-33 (MVYRNRSKSVLSTHSKKSDDKAHYKSRSKKKSK). Over 1 to 39 (MVYRNRSKSVLSTHSKKSDDKAHYKSRSKKKSKSRSKKR) the chain is Cytoplasmic. The segment covering 24–33 (YKSRSKKKSK) has biased composition (basic residues). A helical transmembrane segment spans residues 40–60 (LRIYWRYISIVWILWLGLISY). Residues 61–391 (YESVVVKRAM…LCYMPDPYKA (331 aa)) are Extracellular-facing. 4 residues coordinate a divalent metal cation: aspartate 95, aspartate 144, asparagine 183, and histidine 323. Residues 392-412 (IRMYLWGLLFSAAFIAYMHFF) form a helical membrane-spanning segment. At 413–465 (PKSFNNRVATIMNRVFTRPDGNTSDLPLPTSISKSKSKKSLTHSKYAVNDTRS) the chain is on the cytoplasmic side. A helical transmembrane segment spans residues 466-486 (IKQFLVNAIVLFVSVMPIFIY). Over 487 to 491 (FYTVV) the chain is Extracellular.

It belongs to the metallophosphoesterase superfamily. MPPE1 family. The cofactor is a divalent metal cation.

Its subcellular location is the membrane. In terms of biological role, probable metallophosphoesterase which may participate in recombinational repair of double -strand breaks. This Saccharomyces cerevisiae (strain ATCC 204508 / S288c) (Baker's yeast) protein is Cell division control protein 1 (CDC1).